Consider the following 145-residue polypeptide: 3-hydroxyacyl-[acyl-carrier-protein] dehydratase FabZ (145 aa).

Residue H48 is part of the active site.

It belongs to the thioester dehydratase family. FabZ subfamily.

It is found in the cytoplasm. The enzyme catalyses a (3R)-hydroxyacyl-[ACP] = a (2E)-enoyl-[ACP] + H2O. In terms of biological role, involved in unsaturated fatty acids biosynthesis. Catalyzes the dehydration of short chain beta-hydroxyacyl-ACPs and long chain saturated and unsaturated beta-hydroxyacyl-ACPs. The chain is 3-hydroxyacyl-[acyl-carrier-protein] dehydratase FabZ from Stutzerimonas stutzeri (strain A1501) (Pseudomonas stutzeri).